The chain runs to 3313 residues: PHD finger protein rhinoceros (3313 aa).

A compositionally biased stretch (basic residues) spans 1 to 16 (MSQRGKRGNQHHHQSH). The segment at 1 to 136 (MSQRGKRGNQ…QGASTSSSWQ (136 aa)) is disordered. Low complexity-rich tracts occupy residues 42–71 (PPNG…ATGG) and 100–134 (LGAA…TSSS). The PHD-type 1 zinc-finger motif lies at 323–373 (NVICDVCRSPDSEEANEMVFCDNCNICVHQACYGITAIPSGQWLCRTCSMG). The segment at 375 to 409 (TPDCVLCPNKAGAMKSNKSGKHWAHVSCALWIPEV) adopts a C2HC pre-PHD-type zinc-finger fold. Residues 433–487 (LVCVLCRKRVGSCIQCSKHSMSKGKKENAGGASGGGSASVTSSMHKANKYATGTG) form a PHD-type 2; degenerate zinc finger. Disordered regions lie at residues 453 to 526 (MSKG…ARAQ), 708 to 1076 (LQSG…TKAA), 1107 to 1842 (KEAK…PPSH), 1961 to 2033 (AQKE…TMGN), 2104 to 2136 (PVTA…RMQR), 2145 to 2164 (ARRS…PPAT), 2219 to 2252 (AAPQ…FNGG), 2353 to 2374 (PAYP…PAHP), 2398 to 2514 (VAAK…PPPM), 2563 to 2587 (TTRG…LHPV), 2647 to 2679 (ATGT…QPPA), 2827 to 2871 (SCGL…SSSR), 2888 to 2954 (LAGA…IKIR), 2978 to 2998 (YEMT…YSTP), 3017 to 3077 (DFDK…SATT), 3144 to 3233 (KAEK…SLPE), and 3259 to 3313 (YENS…CEVR). The segment covering 512 to 526 (KNDMTSEERNQARAQ) has biased composition (basic and acidic residues). Positions 735–749 (KKLNNGAITSRTSSP) are enriched in polar residues. The span at 760–772 (STSTSTATATTAA) shows a compositional bias: low complexity. Over residues 792–802 (GAATGTSTHNK) the composition is skewed to polar residues. 2 stretches are compositionally biased toward low complexity: residues 803 to 861 (TQSQ…ASGI) and 894 to 912 (EAAA…ATSS). Residues 919 to 934 (QQRRRQEPERERDGRG) show a composition bias toward basic and acidic residues. Over residues 942–955 (TVPNRTQPTKSKQS) the composition is skewed to polar residues. The span at 956–972 (TQADAGSGAGTGAAVET) shows a compositional bias: low complexity. Positions 994–1003 (ESLSSDESEE) are enriched in acidic residues. Over residues 1015–1025 (AALSSGLAASG) the composition is skewed to low complexity. A compositionally biased stretch (polar residues) spans 1058–1072 (VESNVSDSQNQQTIR). 2 stretches are compositionally biased toward basic and acidic residues: residues 1159-1168 (AADRMREPES) and 1178-1205 (KLKD…KEQS). Residues 1250–1266 (EAKSTAPAAKPTAAKTS) are compositionally biased toward low complexity. Polar residues predominate over residues 1285–1301 (LKSSKPLQDTTFSTANE). 3 stretches are compositionally biased toward low complexity: residues 1308 to 1324 (AATT…GVAT), 1377 to 1404 (SSSS…SGSD), and 1451 to 1464 (PAAS…AAAT). The span at 1475–1485 (TARTRQNSTNK) shows a compositional bias: polar residues. Residues 1551–1579 (SPEKQTARRKSRADESPKKIPNLEHEINQ) are compositionally biased toward basic and acidic residues. Positions 1638–1650 (PVVEPEVETEIEP) are enriched in acidic residues. The span at 1667 to 1678 (TAPTHTQLSANA) shows a compositional bias: polar residues. Pro residues predominate over residues 1691–1702 (PAAPLPASPTPT). Residues 1722-1734 (SRWRSRRRRRRRS) show a composition bias toward basic residues. A coiled-coil region spans residues 1744–1773 (HTQHLLNEMEMARELEEERKNELLANASKY). Over residues 1753 to 1765 (EMARELEEERKNE) the composition is skewed to basic and acidic residues. Polar residues-rich tracts occupy residues 1771–1781 (SKYSASTSSPA) and 1796–1805 (DSNSANSGGD). Residues 1806 to 1819 (QQQQQQQQPLPQQL) are compositionally biased toward low complexity. Positions 1823–1832 (SPSSEVASTI) are enriched in polar residues. Low complexity predominate over residues 1965-1984 (QQQQQQQQQQQQQQQQQQQQ). Polar residues-rich tracts occupy residues 1985–1999 (SCLY…SVAS) and 2007–2018 (MTANSGSYANSL). Over residues 2019–2033 (TNTPNATPTNATMGN) the composition is skewed to low complexity. The segment covering 2106-2118 (TAQSGAGSNSNKL) has biased composition (polar residues). Low complexity-rich tracts occupy residues 2148-2157 (SSSPSSVSES) and 2222-2242 (QQQT…QQQQ). Pro residues predominate over residues 2439–2451 (PVQPQPPTPPAPA). Positions 2479-2488 (GSGGSGAPGR) are enriched in gly residues. Low complexity predominate over residues 2658 to 2679 (PAVSAAPVAPAPAPAANSQPPA). Over residues 2891-2900 (ASGGGAGTAS) the composition is skewed to gly residues. The segment covering 2909-2924 (CSSGSNNDNNGKTGAA) has biased composition (polar residues). Positions 2935 to 2946 (KTLESSEDDHQT) are enriched in basic and acidic residues. Residues 3017-3026 (DFDKGEENNK) are compositionally biased toward basic and acidic residues. The span at 3046–3065 (KRPKSSKPKKDKKEKKRQKQ) shows a compositional bias: basic residues. Residues 3179–3198 (TSPQGLLLNSFTPHSQNANA) are compositionally biased toward polar residues. Low complexity predominate over residues 3268 to 3290 (SASGTGSASSNSCNSNSNNNNNN). Residues 3291–3302 (GSGGGAASGGGS) show a composition bias toward gly residues.

This sequence belongs to the JADE family.

The protein localises to the nucleus. Functionally, may function as a negative regulator of the EGFR/Ras/MAPK signaling pathway during eye development. This chain is PHD finger protein rhinoceros (rno), found in Drosophila pseudoobscura pseudoobscura (Fruit fly).